The following is a 231-amino-acid chain: Ribose-5-phosphate isomerase A (231 aa).

Substrate is bound by residues 28–31 (TGST), 83–86 (DGAD), and 96–99 (KGGG). The Proton acceptor role is filled by Glu105. Lys123 is a binding site for substrate.

It belongs to the ribose 5-phosphate isomerase family. As to quaternary structure, homodimer.

The enzyme catalyses aldehydo-D-ribose 5-phosphate = D-ribulose 5-phosphate. Its pathway is carbohydrate degradation; pentose phosphate pathway; D-ribose 5-phosphate from D-ribulose 5-phosphate (non-oxidative stage): step 1/1. Its function is as follows. Catalyzes the reversible conversion of ribose-5-phosphate to ribulose 5-phosphate. This Sinorhizobium fredii (strain NBRC 101917 / NGR234) protein is Ribose-5-phosphate isomerase A.